A 509-amino-acid chain; its full sequence is ATP synthase subunit alpha (509 aa).

171-178 (GDRKTGKT) is an ATP binding site.

Belongs to the ATPase alpha/beta chains family. As to quaternary structure, F-type ATPases have 2 components, CF(1) - the catalytic core - and CF(0) - the membrane proton channel. CF(1) has five subunits: alpha(3), beta(3), gamma(1), delta(1), epsilon(1). CF(0) has three main subunits: a(1), b(2) and c(9-12). The alpha and beta chains form an alternating ring which encloses part of the gamma chain. CF(1) is attached to CF(0) by a central stalk formed by the gamma and epsilon chains, while a peripheral stalk is formed by the delta and b chains.

The protein localises to the cell inner membrane. The catalysed reaction is ATP + H2O + 4 H(+)(in) = ADP + phosphate + 5 H(+)(out). Its function is as follows. Produces ATP from ADP in the presence of a proton gradient across the membrane. The alpha chain is a regulatory subunit. The protein is ATP synthase subunit alpha of Ehrlichia canis (strain Jake).